The sequence spans 154 residues: Myoglobin (154 aa).

The Globin domain maps to 2–148 (GLSDGEWELV…FRNDIAAKYK (147 aa)). Ser-4 is modified (phosphoserine). The residue at position 68 (Thr-68) is a Phosphothreonine. Residue His-94 coordinates heme b.

It belongs to the globin family. Monomeric.

It is found in the cytoplasm. The protein resides in the sarcoplasm. The enzyme catalyses Fe(III)-heme b-[protein] + nitric oxide + H2O = Fe(II)-heme b-[protein] + nitrite + 2 H(+). It catalyses the reaction H2O2 + AH2 = A + 2 H2O. Its function is as follows. Monomeric heme protein which primary function is to store oxygen and facilitate its diffusion within muscle tissues. Reversibly binds oxygen through a pentacoordinated heme iron and enables its timely and efficient release as needed during periods of heightened demand. Depending on the oxidative conditions of tissues and cells, and in addition to its ability to bind oxygen, it also has a nitrite reductase activity whereby it regulates the production of bioactive nitric oxide. Under stress conditions, like hypoxia and anoxia, it also protects cells against reactive oxygen species thanks to its pseudoperoxidase activity. The sequence is that of Myoglobin (MB) from Loxodonta africana (African elephant).